Here is a 165-residue protein sequence, read N- to C-terminus: Pro-MCH (165 aa).

Residues methionine 1–glycine 21 form the signal peptide. The tract at residues tyrosine 66–glutamine 89 is disordered. Isoleucine amide is present on isoleucine 143. A disulfide bridge links cysteine 153 with cysteine 162.

This sequence belongs to the MCH family. In terms of processing, pro-MCH is processed differentially in the brain and in peripheral organs producing two neuropeptides; NEI and MCH. A third peptide, NGE, may also be produced. Preferential processing in neurons by prohormone convertase 2 (PC2) generates NEI. MCH is generated in neurons of the lateral hypothalmic area by several prohormone convertases including PC1/3, PC2 and PC5/6. As to expression, predominantly expressed in hypothalamus. Also found in heart, intestine, spleen and testis (spermatogonia, early spermatocytes and Sertoli cells). In brain only mature MCH and NEI peptides are present. In peripheral tissues a large product, encompassing the NEI and MCH domains of the precursor, is found predominantly.

The protein localises to the secreted. Functionally, MCH may act as a neurotransmitter or neuromodulator in a broad array of neuronal functions directed toward the regulation of goal-directed behavior, such as food intake, and general arousal. The polypeptide is Pro-MCH (Pmch) (Mus musculus (Mouse)).